The chain runs to 298 residues: Acetylglutamate kinase (298 aa).

Substrate-binding positions include G69–G70, R91, and N191.

This sequence belongs to the acetylglutamate kinase family. ArgB subfamily.

The protein resides in the cytoplasm. The enzyme catalyses N-acetyl-L-glutamate + ATP = N-acetyl-L-glutamyl 5-phosphate + ADP. The protein operates within amino-acid biosynthesis; L-arginine biosynthesis; N(2)-acetyl-L-ornithine from L-glutamate: step 2/4. Its function is as follows. Catalyzes the ATP-dependent phosphorylation of N-acetyl-L-glutamate. The protein is Acetylglutamate kinase of Neisseria meningitidis serogroup C (strain 053442).